Consider the following 243-residue polypeptide: CD48 antigen (243 aa).

The N-terminal stretch at 1 to 26 (MCSRGWDSCLALELLLLPLSLLVTSI) is a signal peptide. Ig-like C2-type domains are found at residues 29–127 (HLVH…KLQV) and 132–212 (PKPV…VCLS). Residues N40, N44, N104, N162, and N189 are each glycosylated (N-linked (GlcNAc...) asparagine). An intrachain disulfide couples C154 to C196. A lipid anchor (GPI-anchor amidated serine) is attached at S220. Residues 221–243 (FGVEWIASWLVVTVPTILGLLLT) constitute a propeptide, removed in mature form.

Interacts with CD2. Interacts with CD244; this interaction is possible not only on different cells (trans interaction) but also on the same cell (cis interaction). Interacts with LCK. In terms of tissue distribution, widely expressed on all hematopoietic cells.

It localises to the cell membrane. The protein resides in the membrane raft. Its subcellular location is the secreted. Glycosylphosphatidylinositol (GPI)-anchored cell surface glycoprotein that interacts via its N-terminal immunoglobulin domain with cell surface receptors including CD244/2B4 or CD2 to regulate immune cell function and activation. Participates in T-cell signaling transduction by associating with CD2 and efficiently bringing the Src family protein kinase LCK and LAT to the TCR/CD3 complex. In turn, promotes LCK phosphorylation and subsequent activation. Induces the phosphorylation of the cytoplasmic immunoreceptortyrosine switch motifs (ITSMs) of CD244 initiating a series of signaling events that leads to the generation of the immunological synapse and the directed release of cytolytic granules containing perforin and granzymes by T-lymphocytes and NK-cells. This Homo sapiens (Human) protein is CD48 antigen (CD48).